The following is a 152-amino-acid chain: CASP-like protein 5B3 (152 aa).

Topologically, residues 1-21 are cytoplasmic; it reads MIDIPGTPGTLTGLVLRISQC. Transmembrane regions (helical) follow at residues 22-42 and 43-63; these read VFAAGSISYMVTSGGFFSFTA and FCYLIAAMGLQVIWSFGLAIL. Residues 64 to 77 are Extracellular-facing; sequence DTFALVRKKTLLSP. A helical membrane pass occupies residues 78 to 98; that stretch reads VLVSLFVVGDWVTSTLSLAGA. Residues 99–127 are Cytoplasmic-facing; sequence SSSAGITVLYFGDLGSCSFEAECWKYQLS. The helical transmembrane segment at 128–148 threads the bilayer; the sequence is VALAFLCWITIAVSSLTTLWL. Residues 149–152 lie on the Extracellular side of the membrane; it reads LASA.

Belongs to the Casparian strip membrane proteins (CASP) family. In terms of assembly, homodimer and heterodimers. As to expression, expressed in the stele of the root and in leaves.

It localises to the cell membrane. The polypeptide is CASP-like protein 5B3 (Arabidopsis thaliana (Mouse-ear cress)).